Consider the following 245-residue polypeptide: 1-(5-phosphoribosyl)-5-[(5-phosphoribosylamino)methylideneamino] imidazole-4-carboxamide isomerase (245 aa).

Asp-7 functions as the Proton acceptor in the catalytic mechanism. The active-site Proton donor is Asp-129.

This sequence belongs to the HisA/HisF family.

The protein localises to the cytoplasm. It catalyses the reaction 1-(5-phospho-beta-D-ribosyl)-5-[(5-phospho-beta-D-ribosylamino)methylideneamino]imidazole-4-carboxamide = 5-[(5-phospho-1-deoxy-D-ribulos-1-ylimino)methylamino]-1-(5-phospho-beta-D-ribosyl)imidazole-4-carboxamide. It participates in amino-acid biosynthesis; L-histidine biosynthesis; L-histidine from 5-phospho-alpha-D-ribose 1-diphosphate: step 4/9. The protein is 1-(5-phosphoribosyl)-5-[(5-phosphoribosylamino)methylideneamino] imidazole-4-carboxamide isomerase of Escherichia coli O17:K52:H18 (strain UMN026 / ExPEC).